The sequence spans 285 residues: Cytochrome c1 (285 aa).

The signal sequence occupies residues 1 to 22 (MIRKLTLTAATALALSGGAAMA). Residues cysteine 58, cysteine 61, histidine 62, and methionine 207 each contribute to the heme c site. The helical transmembrane segment at 251–269 (AGFTAVMFLTVLSVLLYLT) threads the bilayer.

As to quaternary structure, the main subunits of complex b-c1 are: cytochrome b, cytochrome c1 and the Rieske protein. Post-translationally, binds 1 heme c group covalently per subunit.

Its subcellular location is the cell membrane. Component of the ubiquinol-cytochrome c reductase complex (complex III or cytochrome b-c1 complex), which is a respiratory chain that generates an electrochemical potential coupled to ATP synthesis. c1 functions as an electron donor to cytochrome c. The polypeptide is Cytochrome c1 (petC) (Cereibacter sphaeroides (Rhodobacter sphaeroides)).